A 945-amino-acid polypeptide reads, in one-letter code: Leucine--tRNA ligase (945 aa).

The 'HIGH' region signature appears at 43-53; sequence PYPNGAVHIGH. The 'KMSKS' region motif lies at 638–642; it reads KMSKS. An ATP-binding site is contributed by Lys641.

Belongs to the class-I aminoacyl-tRNA synthetase family.

The protein resides in the cytoplasm. It carries out the reaction tRNA(Leu) + L-leucine + ATP = L-leucyl-tRNA(Leu) + AMP + diphosphate. This Pyrobaculum islandicum (strain DSM 4184 / JCM 9189 / GEO3) protein is Leucine--tRNA ligase.